A 165-amino-acid chain; its full sequence is Large ribosomal subunit protein uL11 (165 aa).

The protein belongs to the universal ribosomal protein uL11 family.

Binds directly to 26S ribosomal RNA. The sequence is that of Large ribosomal subunit protein uL11 (rpl-12) from Caenorhabditis briggsae.